The following is a 290-amino-acid chain: Glutamate 5-kinase (290 aa).

Lys21 is an ATP binding site. Substrate is bound by residues Ser60, Asp151, and Asn163. 217 to 223 is an ATP binding site; it reads TGGMFTK.

It belongs to the glutamate 5-kinase family.

It localises to the cytoplasm. It carries out the reaction L-glutamate + ATP = L-glutamyl 5-phosphate + ADP. Its pathway is amino-acid biosynthesis; L-proline biosynthesis; L-glutamate 5-semialdehyde from L-glutamate: step 1/2. In terms of biological role, catalyzes the transfer of a phosphate group to glutamate to form L-glutamate 5-phosphate. The chain is Glutamate 5-kinase from Leptospira interrogans serogroup Icterohaemorrhagiae serovar copenhageni (strain Fiocruz L1-130).